The primary structure comprises 421 residues: Signal recognition particle receptor FtsY (421 aa).

Over residues 1-10 (MFSFFRRKKK) the composition is skewed to basic residues. A disordered region spans residues 1–31 (MFSFFRRKKKQETPALEEAQIQETAAKAESE). GTP contacts are provided by residues 228–235 (GINGAGKT), 309–313 (DTAGR), and 373–376 (TKLD).

It belongs to the GTP-binding SRP family. FtsY subfamily. As to quaternary structure, part of the signal recognition particle protein translocation system, which is composed of SRP and FtsY. SRP is a ribonucleoprotein composed of Ffh and a 4.5S RNA molecule.

The protein resides in the cell inner membrane. It localises to the cytoplasm. The catalysed reaction is GTP + H2O = GDP + phosphate + H(+). In terms of biological role, involved in targeting and insertion of nascent membrane proteins into the cytoplasmic membrane. Acts as a receptor for the complex formed by the signal recognition particle (SRP) and the ribosome-nascent chain (RNC). Interaction with SRP-RNC leads to the transfer of the RNC complex to the Sec translocase for insertion into the membrane, the hydrolysis of GTP by both Ffh and FtsY, and the dissociation of the SRP-FtsY complex into the individual components. The protein is Signal recognition particle receptor FtsY of Neisseria meningitidis serogroup A / serotype 4A (strain DSM 15465 / Z2491).